A 429-amino-acid polypeptide reads, in one-letter code: Adenosylmethionine-8-amino-7-oxononanoate aminotransferase (429 aa).

A substrate-binding site is contributed by tryptophan 52. A pyridoxal 5'-phosphate-binding site is contributed by 112–113 (GS). Tyrosine 144 serves as a coordination point for substrate. Residue aspartate 245 coordinates pyridoxal 5'-phosphate. Residues lysine 274 and glycine 307 each coordinate substrate. Lysine 274 is modified (N6-(pyridoxal phosphate)lysine). 308-309 (PT) contributes to the pyridoxal 5'-phosphate binding site. Arginine 391 provides a ligand contact to substrate.

Belongs to the class-III pyridoxal-phosphate-dependent aminotransferase family. BioA subfamily. As to quaternary structure, homodimer. Pyridoxal 5'-phosphate is required as a cofactor.

The protein localises to the cytoplasm. It catalyses the reaction (8S)-8-amino-7-oxononanoate + S-adenosyl-L-methionine = S-adenosyl-4-methylsulfanyl-2-oxobutanoate + (7R,8S)-7,8-diammoniononanoate. It participates in cofactor biosynthesis; biotin biosynthesis; 7,8-diaminononanoate from 8-amino-7-oxononanoate (SAM route): step 1/1. Its function is as follows. Catalyzes the transfer of the alpha-amino group from S-adenosyl-L-methionine (SAM) to 7-keto-8-aminopelargonic acid (KAPA) to form 7,8-diaminopelargonic acid (DAPA). It is the only aminotransferase known to utilize SAM as an amino donor. The chain is Adenosylmethionine-8-amino-7-oxononanoate aminotransferase from Buchnera aphidicola subsp. Baizongia pistaciae (strain Bp).